Here is a 377-residue protein sequence, read N- to C-terminus: Probable isocitrate dehydrogenase [NAD] subunit alpha, mitochondrial (377 aa).

Residues Arg131, Arg141, Arg162, and Asp249 each contribute to the substrate site. Mg(2+) contacts are provided by Asp249, Asp273, and Asp277.

This sequence belongs to the isocitrate and isopropylmalate dehydrogenases family. Heterooligomer of subunits alpha, beta, and gamma in the apparent ratio of 2:1:1. The cofactor is Mg(2+). Mn(2+) serves as cofactor.

It is found in the mitochondrion. It carries out the reaction D-threo-isocitrate + NAD(+) = 2-oxoglutarate + CO2 + NADH. In terms of biological role, probable catalytic subunit of the enzyme which catalyzes the decarboxylation of isocitrate (ICT) into alpha-ketoglutarate. The protein is Probable isocitrate dehydrogenase [NAD] subunit alpha, mitochondrial of Drosophila melanogaster (Fruit fly).